The sequence spans 61 residues: uncharacterized protein (61 aa).

Transmembrane regions (helical) follow at residues 4–24 (IIAF…VASM) and 34–54 (SSVI…IMPM).

Its subcellular location is the cell membrane. This is an uncharacterized protein from Bacillus subtilis (strain 168).